A 645-amino-acid chain; its full sequence is MLPASLQRKAAAVGGRGPTNQSRVAVRVSAQPKEAPPASTPIVEDPESKFRRYGKHFGGIHKLSMDWLDSVPRVRVRTKDSRQLDDMLELAVLNERLAGRLEPWQARQKLEYLRKRRKNWERIFEYVTRQDAAATLAMIEEANRKVEESLSEEAREKTAVGDLRDQLESLRAQVAQAQERLAMTQSRVEQNLQRVNELKAEATTLERMRKASDLDIKERERIAISTVAAKGPASSSSSAAAVSAPATSATLTVERPAATTVTQEVPSTSYGTPVDRAPRRSKAAIRRSRGLESSMEIEEGLRNFWYPAEFSARLPKDTLVPFELFGEPWVMFRDEKGQPSCIRDECAHRGCPLSLGKVVEGQVMCPYHGWEFNGDGACTKMPSTPFCRNVGVAALPCAEKDGFIWVWPGDGLPAETLPDFAQPPEGFLIHAEIMVDVPVEHGLLIENLLDLAHAPFTHTSTFARGWPVPDFVKFHANKALSGFWDPYPIDMAFQPPCMTLSTIGLAQPGKIMRGVTASQCKNHLHQLHVCMPSKKGHTRLLYRMSLDFLPWMRHVPFIDRIWKQVAAQVLGEDLVLVLGQQDRMLRGGSNWSNPAPYDKLAVRYRRWRNGVNAEVARVRAGEPPSNPVAMSAGEMFSVDEDDMDN.

Residues 1 to 46 form a disordered region; the sequence is MLPASLQRKAAAVGGRGPTNQSRVAVRVSAQPKEAPPASTPIVEDP. A coiled-coil region spans residues 105-218; the sequence is QARQKLEYLR…RKASDLDIKE (114 aa). Residues 258–287 form a disordered region; it reads ATTVTQEVPSTSYGTPVDRAPRRSKAAIRR. The segment covering 259-271 has biased composition (polar residues); that stretch reads TTVTQEVPSTSYG. The Rieske domain occupies 305–406; that stretch reads WYPAEFSARL…CAEKDGFIWV (102 aa). 4 residues coordinate [2Fe-2S] cluster: Cys346, His348, Cys365, and His368. Fe cation-binding residues include Glu446, Asp450, His453, and His458.

It is found in the plastid. Its subcellular location is the chloroplast inner membrane. It localises to the chloroplast thylakoid membrane. The catalysed reaction is chlorophyllide a + 2 NADPH + 2 O2 + 2 H(+) = chlorophyllide b + 2 NADP(+) + 3 H2O. In terms of biological role, catalyzes a two-step oxygenase reaction involved in the synthesis of chlorophyll b. Acts specifically on the non-esterified chlorophyllide a and not on chlorophyll a. The sequence is that of Chlorophyllide a oxygenase, chloroplastic (CAO) from Chlamydomonas reinhardtii (Chlamydomonas smithii).